The following is a 496-amino-acid chain: Probable diguanylate cyclase DgcJ (496 aa).

A run of 2 helical transmembrane segments spans residues 11–31 and 305–325; these read FIAA…LVAS and ILYF…TALI. Positions 374–496 constitute a GGDEF domain; it reads SSVMFIAIDM…VNKQNKNSRS (123 aa). D382 lines the Mg(2+) pocket. Substrate contacts are provided by N390, H395, and D399. Residue D425 participates in Mg(2+) binding. Catalysis depends on D425, which acts as the Proton acceptor.

As to quaternary structure, homodimer. The cofactor is Mg(2+).

Its subcellular location is the cell inner membrane. It carries out the reaction 2 GTP = 3',3'-c-di-GMP + 2 diphosphate. Its pathway is purine metabolism; 3',5'-cyclic di-GMP biosynthesis. Catalyzes the synthesis of cyclic-di-GMP (c-di-GMP) via the condensation of 2 GTP molecules. The protein is Probable diguanylate cyclase DgcJ of Escherichia coli (strain K12).